A 210-amino-acid chain; its full sequence is Orotate phosphoribosyltransferase (210 aa).

5-phospho-alpha-D-ribose 1-diphosphate contacts are provided by residues Arg97, Lys101, His103, and 123 to 131 (EDLISTGGS). Orotate is bound at residue Ser127.

The protein belongs to the purine/pyrimidine phosphoribosyltransferase family. PyrE subfamily. Homodimer. It depends on Mg(2+) as a cofactor.

The catalysed reaction is orotidine 5'-phosphate + diphosphate = orotate + 5-phospho-alpha-D-ribose 1-diphosphate. It participates in pyrimidine metabolism; UMP biosynthesis via de novo pathway; UMP from orotate: step 1/2. Its function is as follows. Catalyzes the transfer of a ribosyl phosphate group from 5-phosphoribose 1-diphosphate to orotate, leading to the formation of orotidine monophosphate (OMP). The chain is Orotate phosphoribosyltransferase from Enterococcus faecalis (strain ATCC 700802 / V583).